Here is a 160-residue protein sequence, read N- to C-terminus: MPKTSVWKTRVGTQILMGKITDITQIGIDRIPCAQVRCQMNEFNIYLKKYFARSFDFWALDKTSLGNIGDTVLIKQIDGSSRPKANVSHAVDRVVFKFGNIVDPVTGRKIFNDTFADEIDLKKVLVEEVVDKPLEEESMLFEERRALQIRRLEQEKEANV.

The protein belongs to the universal ribosomal protein uS17 family. In terms of assembly, component of the mitochondrial ribosome small subunit (28S) which comprises a 12S rRNA and about 30 distinct proteins.

Its subcellular location is the mitochondrion. This chain is Small ribosomal subunit protein uS17m (mrps-17), found in Caenorhabditis elegans.